A 245-amino-acid chain; its full sequence is Eukaryotic translation initiation factor 6 (245 aa).

2 positions are modified to phosphoserine; by CK1: S174 and S175. Phosphoserine is present on S231.

Belongs to the eIF-6 family. Monomer. Associates with the 60S ribosomal subunit. Phosphorylation at Ser-174 and Ser-175 promotes nuclear export.

It localises to the cytoplasm. The protein localises to the nucleus. Its subcellular location is the nucleolus. Binds to the 60S ribosomal subunit and prevents its association with the 40S ribosomal subunit to form the 80S initiation complex in the cytoplasm. Is also involved in ribosome biogenesis. Associates with pre-60S subunits in the nucleus and is involved in its nuclear export. Cytoplasmic release of TIF6 from 60S subunits and nuclear relocalization is promoted by the GTPase RIA1/EFL1 and by SDO1. Also required for pre-rRNA processing. The protein is Eukaryotic translation initiation factor 6 of Saccharomyces cerevisiae (strain ATCC 204508 / S288c) (Baker's yeast).